A 572-amino-acid polypeptide reads, in one-letter code: Urease subunit alpha (572 aa).

Residues His-139, His-141, and Lys-222 each contribute to the Ni(2+) site. Lys-222 carries the post-translational modification N6-carboxylysine. A substrate-binding site is contributed by His-224. Ni(2+) contacts are provided by His-251 and His-277. Catalysis depends on His-325, which acts as the Proton donor. Residue Asp-365 coordinates Ni(2+).

Belongs to the metallo-dependent hydrolases superfamily. Urease alpha subunit family. In terms of assembly, heterotrimer of UreA (gamma), UreB (beta) and UreC (alpha) subunits. Three heterotrimers associate to form the active enzyme. The cofactor is Ni cation. Carboxylation allows a single lysine to coordinate two nickel ions.

Its subcellular location is the cytoplasm. It catalyses the reaction urea + 2 H2O + H(+) = hydrogencarbonate + 2 NH4(+). Its pathway is nitrogen metabolism; urea degradation; CO(2) and NH(3) from urea (urease route): step 1/1. The chain is Urease subunit alpha from Acetivibrio thermocellus (strain ATCC 27405 / DSM 1237 / JCM 9322 / NBRC 103400 / NCIMB 10682 / NRRL B-4536 / VPI 7372) (Clostridium thermocellum).